Reading from the N-terminus, the 347-residue chain is Eukaryotic translation initiation factor 3 subunit I (347 aa).

WD repeat units lie at residues 8-47, 50-89, 149-190, 194-233, and 291-330; these read GHERPLTQVKYNKEGDLLFSCSKDSSASVWYSLNGERLGT, GHTGTIWSIDVDCFTKYCVTGSADYSIKLWDVSNGQCVAT, THEG…EYVD, LHEKSISDMQFSPDLTYFITSSRDTNSFLVDVSTLQVLKK, and GHFGPLNTVAISPQGTSYASGGEDGFIRLHHFEKSYFDFK. Phosphoserine is present on S302.

It belongs to the eIF-3 subunit I family. Component of the eukaryotic translation initiation factor 3 (eIF-3) complex.

It localises to the cytoplasm. Its function is as follows. Component of the eukaryotic translation initiation factor 3 (eIF-3) complex, which is involved in protein synthesis of a specialized repertoire of mRNAs and, together with other initiation factors, stimulates binding of mRNA and methionyl-tRNAi to the 40S ribosome. The eIF-3 complex specifically targets and initiates translation of a subset of mRNAs involved in cell proliferation. The protein is Eukaryotic translation initiation factor 3 subunit I of Saccharomyces cerevisiae (strain YJM789) (Baker's yeast).